We begin with the raw amino-acid sequence, 880 residues long: MADYNDKNYLLHMSGPDSDTGPGIENEDPRAVENPGHDLAESEGGLAAAMQSIPDTLPILPVRDVVIFNYMILPLFIGREKSVQAVEAALKSGRHLLVCAQKEEATEDPGPEDIYQVGTVVQVMRMLKMPDSRVKILVQGVSRARVREFSQVEPFLEAHIETLPEATPKVDATVEALLRSVREQSEKVLSLRGLSSPDVLAVLQGVDDPGRLADLIAANMRMKTADAQQILETEDPLDRLMLVNTQLQREVEVATVQARIQSSAREGMDKAQKDYFLREQLKAIRSELGDKDDEGEEELESLRAALDKAGMPKDVRKEADKQLRRLAGMHADSSEANVVRTYLDWLAELPWKKLSRDRLDIAHAKQILDEDHCGLEKIKDRILEFLSVRKLNPQSKGPILCFAGPPGVGKTSLGRSVARALGRKFQRLSLGGMHDEAEIRGHRRTYIGAMPGRIIQSLKQAGTRNPVIVLDEVDKLGADFRGDPSSALLEVLDPEQNHTFSDHYLNVPFDLSKVMFLCTANHLETIPAPLRDRMEVITLPGYTMQEKAEIARKHLLPKKIKENGLQEKDVTLDDAALEKVIREYTREAGLRNLERELSSICRKLARRKAEGKKGPFRVSTADVEKLLGAPRFIEDEKEKKLMPGMALGLAWTPAGGEVLTVEATVMKGKGGLTLTGQLGDVMKESAQAALSYIRSRAEELGVDPSFVSEYDIHVHVPAGATPKDGPSAGVTLTTALISALNGHRVRADLCMTGEITLQGRVLPVGGIKEKILAGVARGLKHVVIPWQNTKDLEDVPKELLKRITVHPVHHYDELLPLVFEGKSGKGGVSGAGQAGDKGGKSKAAAGKKDVVAARPAKPAAPARRRKDKTEDELPTAEAGA.

Positions Met1–His37 are disordered. Over residues Glu27–His37 the composition is skewed to basic and acidic residues. A Lon N-terminal domain is found at Leu57–Val251. Gly404 to Thr411 contributes to the ATP binding site. The Lon proteolytic domain maps to Lys640 to Gly821. Residues Ser727 and Lys770 contribute to the active site. Positions Gly826–Asp836 are enriched in gly residues. The disordered stretch occupies residues Gly826 to Ala880. Residues Ala852–Pro861 show a composition bias toward low complexity.

Belongs to the peptidase S16 family. As to quaternary structure, homohexamer. Organized in a ring with a central cavity.

It is found in the cytoplasm. It carries out the reaction Hydrolysis of proteins in presence of ATP.. Its function is as follows. ATP-dependent serine protease that mediates the selective degradation of mutant and abnormal proteins as well as certain short-lived regulatory proteins. Required for cellular homeostasis and for survival from DNA damage and developmental changes induced by stress. Degrades polypeptides processively to yield small peptide fragments that are 5 to 10 amino acids long. Binds to DNA in a double-stranded, site-specific manner. This is Lon protease from Desulfovibrio desulfuricans (strain ATCC 27774 / DSM 6949 / MB).